We begin with the raw amino-acid sequence, 464 residues long: Kynureninase 2 (464 aa).

Pyridoxal 5'-phosphate-binding positions include Leu135, Thr136, 163 to 166 (FPSD), Asp248, His251, and Tyr273. Lys274 is subject to N6-(pyridoxal phosphate)lysine. Pyridoxal 5'-phosphate is bound by residues Trp313 and Asn341.

The protein belongs to the kynureninase family. Homodimer. It depends on pyridoxal 5'-phosphate as a cofactor.

The protein localises to the cytoplasm. It catalyses the reaction L-kynurenine + H2O = anthranilate + L-alanine + H(+). It carries out the reaction 3-hydroxy-L-kynurenine + H2O = 3-hydroxyanthranilate + L-alanine + H(+). Its pathway is amino-acid degradation; L-kynurenine degradation; L-alanine and anthranilate from L-kynurenine: step 1/1. It participates in cofactor biosynthesis; NAD(+) biosynthesis; quinolinate from L-kynurenine: step 2/3. Functionally, catalyzes the cleavage of L-kynurenine (L-Kyn) and L-3-hydroxykynurenine (L-3OHKyn) into anthranilic acid (AA) and 3-hydroxyanthranilic acid (3-OHAA), respectively. This chain is Kynureninase 2 (bna5-2), found in Aspergillus clavatus (strain ATCC 1007 / CBS 513.65 / DSM 816 / NCTC 3887 / NRRL 1 / QM 1276 / 107).